A 309-amino-acid chain; its full sequence is Tagatose-6-phosphate kinase (309 aa).

Belongs to the carbohydrate kinase PfkB family. LacC subfamily.

The catalysed reaction is D-tagatofuranose 6-phosphate + ATP = D-tagatofuranose 1,6-bisphosphate + ADP + H(+). The protein operates within carbohydrate metabolism; D-tagatose 6-phosphate degradation; D-glyceraldehyde 3-phosphate and glycerone phosphate from D-tagatose 6-phosphate: step 1/2. This is Tagatose-6-phosphate kinase from Streptococcus pneumoniae (strain 70585).